The chain runs to 539 residues: Glutathione synthetase, chloroplastic (539 aa).

The N-terminal 61 residues, 1-61, are a transit peptide targeting the chloroplast; it reads MGSGCSSLSY…SPLRCGRSFK (61 aa). Residue arginine 193 coordinates substrate. Residue glutamate 209 participates in ATP binding. Residues glutamate 209 and asparagine 211 each coordinate Mg(2+). Residues 213-216, 281-283, glutamine 287, and 335-338 each bind substrate; these read ISCS, ERN, and RSGY. ATP contacts are provided by residues lysine 374, 428 to 437, tyrosine 439, 464 to 467, and glutamate 490; these read KPQREGGGNN and MQRI. Glutamate 432 is a Mg(2+) binding site. Position 515 (arginine 515) interacts with substrate. Lysine 517 and glutamate 523 together coordinate ATP. 526-527 is a substrate binding site; sequence VA.

This sequence belongs to the eukaryotic GSH synthase family. Homodimer. The cofactor is Mg(2+).

It localises to the plastid. It is found in the chloroplast. The catalysed reaction is gamma-L-glutamyl-L-cysteine + glycine + ATP = glutathione + ADP + phosphate + H(+). It functions in the pathway sulfur metabolism; glutathione biosynthesis; glutathione from L-cysteine and L-glutamate: step 2/2. This Arabidopsis thaliana (Mouse-ear cress) protein is Glutathione synthetase, chloroplastic (GSH2).